Here is an 820-residue protein sequence, read N- to C-terminus: LPS-assembly protein LptD (820 aa).

The disordered stretch occupies residues 1–27 (MDLSSLPDPLRPTHSRLPARRRDRAEP). Residues 13–22 (THSRLPARRR) show a composition bias toward basic residues.

The protein belongs to the LptD family. As to quaternary structure, component of the lipopolysaccharide transport and assembly complex. Interacts with LptE and LptA.

In terms of biological role, together with LptE, is involved in the assembly of lipopolysaccharide (LPS) at the surface of the outer membrane. In Paracidovorax citrulli (strain AAC00-1) (Acidovorax citrulli), this protein is LPS-assembly protein LptD.